Reading from the N-terminus, the 380-residue chain is Cytochrome b (380 aa).

The next 4 membrane-spanning stretches (helical) occupy residues phenylalanine 34–methionine 54, tryptophan 78–isoleucine 99, tryptophan 114–leucine 134, and phenylalanine 179–threonine 199. The heme b site is built by histidine 84 and histidine 98. Residues histidine 183 and histidine 197 each coordinate heme b. Residue histidine 202 coordinates a ubiquinone. The next 4 membrane-spanning stretches (helical) occupy residues leucine 227–serine 247, leucine 289–histidine 309, leucine 321–serine 341, and phenylalanine 348–proline 368.

Belongs to the cytochrome b family. In terms of assembly, the cytochrome bc1 complex contains 11 subunits: 3 respiratory subunits (MT-CYB, CYC1 and UQCRFS1), 2 core proteins (UQCRC1 and UQCRC2) and 6 low-molecular weight proteins (UQCRH/QCR6, UQCRB/QCR7, UQCRQ/QCR8, UQCR10/QCR9, UQCR11/QCR10 and a cleavage product of UQCRFS1). This cytochrome bc1 complex then forms a dimer. Requires heme b as cofactor.

The protein localises to the mitochondrion inner membrane. Component of the ubiquinol-cytochrome c reductase complex (complex III or cytochrome b-c1 complex) that is part of the mitochondrial respiratory chain. The b-c1 complex mediates electron transfer from ubiquinol to cytochrome c. Contributes to the generation of a proton gradient across the mitochondrial membrane that is then used for ATP synthesis. In Pterodroma hypoleuca (Bonin petrel), this protein is Cytochrome b (MT-CYB).